The primary structure comprises 303 residues: Major fimbrium anchoring subunit FimB (303 aa).

The N-terminal stretch at 1–22 is a signal peptide; the sequence is MNDAKKYIVSVLILLVAGMFGG. Residue C23 is the site of N-palmitoyl cysteine attachment. C23 carries S-diacylglycerol cysteine lipidation.

Belongs to the bacteroidetes fimbrillin superfamily. FimB/Mfa2 family. As to quaternary structure, fimB is not part of the fimbrium itself, but anchors the fimbrium in the outer membrane. Linear, head-to-tail oligomerization of fimbrial subunits mediates assembly of the fimbrium stalk, while the minor components FimC, FimD and FimE probably form the fimbrium tip. The anchoring subunit FimB limits fimbrium length and is important for solid fimbrium attachment to the outer membrane. In its absence, the major fimbriae become very long and are easily detached from the membrane.

It localises to the cell outer membrane. Functionally, anchoring subunit of the major fimbriae. Regulates fimbrial length. These filamentous pili are attached to the cell surface; they mediate biofilm formation, adhesion onto host cells and onto other bacteria that are part of the oral microbiome. Fimbriae of P.gingivalis are major virulence factors. The chain is Major fimbrium anchoring subunit FimB from Porphyromonas gingivalis (strain ATCC 33277 / DSM 20709 / CIP 103683 / JCM 12257 / NCTC 11834 / 2561).